The primary structure comprises 274 residues: MRFIVTGNKRAADWGAVYIVKKIKEFNPSPEKKFVLGLPTGSTPLQMYKRLIQFNKEGIISFKNVITFNMDEYVGLPKTHPQSYHYYMYNNFFNHIDIDKENVNILNGMAKNYKEECRKYEEKILEVGGIDLFLGGVGVDGHIAFNEPGSSFKSRTREKQLTEDTIIVNSRFFNNDITKVPQSALTVGVSTIMDAKEVLIMVEGNNKARALHMGIEEGINHMWTISALQLHEKAIIVADEDACAELKVATYKYYKDIEKKNYNIDKLIENLYKK.

D71 (proton acceptor; for enolization step) is an active-site residue. D140 functions as the For ring-opening step in the catalytic mechanism. H142 serves as the catalytic Proton acceptor; for ring-opening step. E147 (for ring-opening step) is an active-site residue.

Belongs to the glucosamine/galactosamine-6-phosphate isomerase family. NagB subfamily.

It carries out the reaction alpha-D-glucosamine 6-phosphate + H2O = beta-D-fructose 6-phosphate + NH4(+). Its pathway is amino-sugar metabolism; N-acetylneuraminate degradation; D-fructose 6-phosphate from N-acetylneuraminate: step 5/5. Functionally, catalyzes the reversible isomerization-deamination of glucosamine 6-phosphate (GlcN6P) to form fructose 6-phosphate (Fru6P) and ammonium ion. In Fusobacterium nucleatum subsp. nucleatum (strain ATCC 25586 / DSM 15643 / BCRC 10681 / CIP 101130 / JCM 8532 / KCTC 2640 / LMG 13131 / VPI 4355), this protein is Glucosamine-6-phosphate deaminase.